The chain runs to 375 residues: All-trans-retinol dehydrogenase [NAD(+)] ADH1B (375 aa).

An N-acetylserine modification is found at Ser2. Ser23 is modified (phosphoserine). Phosphotyrosine is present on Tyr35. Zn(2+) is bound by residues Cys47, His68, Cys98, Cys101, Cys104, Cys112, and Cys175. Residues 200-205, Asp224, Lys229, 293-295, and Arg370 each bind NAD(+); these read GLGGVG and VGV.

It belongs to the zinc-containing alcohol dehydrogenase family. Homodimer or heterodimer of closely related subunits. The cofactor is Zn(2+). Expressed in liver.

Its subcellular location is the cytoplasm. It carries out the reaction all-trans-retinol + NAD(+) = all-trans-retinal + NADH + H(+). The enzyme catalyses all-trans-4-hydroxyretinol + NAD(+) = all-trans-4-hydroxyretinal + NADH + H(+). The catalysed reaction is all-trans-4-oxoretinol + NAD(+) = all-trans-4-oxoretinal + NADH + H(+). Catalyzes the NAD-dependent oxidation of all-trans-retinol and its derivatives such as all-trans-4-hydroxyretinol and may participate in retinoid metabolism. In vitro can also catalyze the NADH-dependent reduction of all-trans-retinal and its derivatives such as all-trans-4-oxoretinal. Catalyzes in the oxidative direction with higher efficiency. Has the same affinity for all-trans-4-hydroxyretinol and all-trans-4-oxoretinal. This Papio hamadryas (Hamadryas baboon) protein is All-trans-retinol dehydrogenase [NAD(+)] ADH1B.